We begin with the raw amino-acid sequence, 391 residues long: tRNA (cytosine(38)-C(5))-methyltransferase (391 aa).

Positions 4 to 391 constitute an SAM-dependent MTase C5-type domain; sequence LRALELYSGI…VAKLIKILCD (388 aa). S-adenosyl-L-methionine-binding positions include 13-15, Asp34, 57-58, and Ser76; these read IGG and IE. Cys79 is an active-site residue. Ser376 serves as a coordination point for S-adenosyl-L-methionine.

The protein belongs to the class I-like SAM-binding methyltransferase superfamily. C5-methyltransferase family.

It localises to the cytoplasm. The enzyme catalyses cytidine(38) in tRNA + S-adenosyl-L-methionine = 5-methylcytidine(38) in tRNA + S-adenosyl-L-homocysteine + H(+). Functionally, specifically methylates cytosine 38 in the anticodon loop of tRNA(Asp). Has higher activity on tRNA(Asp) modified with queuosine at position 34. This is tRNA (cytosine(38)-C(5))-methyltransferase (TRDMT1) from Bos taurus (Bovine).